The following is a 246-amino-acid chain: MSKQDEQANRLKTRLGFKWHNPTLLIQALTHSSCVHENRGHGLCHNQRLEFLGDAVLELIISEHLYKMFPDRTEGELTKMRASSVCEPSLAKVARGLDLGRCLRMGRGEERSGGRERPSILADAFEALLGAIYLDQGLEISRHFVLNCLSSIIDDVVAGRLDRDYKTELQEILQQSSPDPLTYTIMDESGPDHDKTFTAGVIYKGKVIGKGSGHSKKEAEQQAAKDAFQHLEGMGKSGHKSAGPIR.

One can recognise an RNase III domain in the interval 8–137; that stretch reads ANRLKTRLGF…LLGAIYLDQG (130 aa). A Mg(2+)-binding site is contributed by Glu50. Asp54 is an active-site residue. Mg(2+)-binding residues include Asp123 and Glu126. Residue Glu126 is part of the active site. In terms of domain architecture, DRBM spans 164 to 233; sequence DYKTELQEIL…AKDAFQHLEG (70 aa). Positions 212 to 246 are disordered; sequence SGHSKKEAEQQAAKDAFQHLEGMGKSGHKSAGPIR.

This sequence belongs to the ribonuclease III family. As to quaternary structure, homodimer. Mg(2+) is required as a cofactor.

Its subcellular location is the cytoplasm. It catalyses the reaction Endonucleolytic cleavage to 5'-phosphomonoester.. Its function is as follows. Digests double-stranded RNA. Involved in the processing of primary rRNA transcript to yield the immediate precursors to the large and small rRNAs (23S and 16S). Processes some mRNAs, and tRNAs when they are encoded in the rRNA operon. Processes pre-crRNA and tracrRNA of type II CRISPR loci if present in the organism. The protein is Ribonuclease 3 of Desulforamulus reducens (strain ATCC BAA-1160 / DSM 100696 / MI-1) (Desulfotomaculum reducens).